A 141-amino-acid polypeptide reads, in one-letter code: Nucleoside diphosphate kinase (141 aa).

ATP contacts are provided by Lys-11, Phe-59, Arg-87, Thr-93, Arg-104, and Asn-114. The active-site Pros-phosphohistidine intermediate is His-117.

Belongs to the NDK family. As to quaternary structure, homotetramer. It depends on Mg(2+) as a cofactor.

It localises to the cytoplasm. It carries out the reaction a 2'-deoxyribonucleoside 5'-diphosphate + ATP = a 2'-deoxyribonucleoside 5'-triphosphate + ADP. The catalysed reaction is a ribonucleoside 5'-diphosphate + ATP = a ribonucleoside 5'-triphosphate + ADP. Major role in the synthesis of nucleoside triphosphates other than ATP. The ATP gamma phosphate is transferred to the NDP beta phosphate via a ping-pong mechanism, using a phosphorylated active-site intermediate. This Burkholderia ambifaria (strain MC40-6) protein is Nucleoside diphosphate kinase.